A 388-amino-acid polypeptide reads, in one-letter code: S-adenosylmethionine synthase (388 aa).

His17 contributes to the ATP binding site. Asp19 serves as a coordination point for Mg(2+). A K(+)-binding site is contributed by Glu45. 2 residues coordinate L-methionine: Glu58 and Gln106. A flexible loop region spans residues 106–116; that stretch reads QSAHISQGVDR. ATP is bound by residues 166 to 168, Asp241, 247 to 248, Ala264, and Lys268; these read DAK and RK. Asp241 serves as a coordination point for L-methionine. L-methionine is bound at residue Lys272.

Belongs to the AdoMet synthase family. As to quaternary structure, homotetramer; dimer of dimers. The cofactor is Mg(2+). K(+) serves as cofactor.

Its subcellular location is the cytoplasm. The enzyme catalyses L-methionine + ATP + H2O = S-adenosyl-L-methionine + phosphate + diphosphate. It participates in amino-acid biosynthesis; S-adenosyl-L-methionine biosynthesis; S-adenosyl-L-methionine from L-methionine: step 1/1. Its function is as follows. Catalyzes the formation of S-adenosylmethionine (AdoMet) from methionine and ATP. The overall synthetic reaction is composed of two sequential steps, AdoMet formation and the subsequent tripolyphosphate hydrolysis which occurs prior to release of AdoMet from the enzyme. The sequence is that of S-adenosylmethionine synthase from Paracoccus denitrificans (strain Pd 1222).